The sequence spans 123 residues: Small ribosomal subunit protein uS12 (123 aa).

3-methylthioaspartic acid is present on Asp89. The tract at residues 104–123 (TAGVQDRRQGRSKYGAKRPK) is disordered. Over residues 113-123 (GRSKYGAKRPK) the composition is skewed to basic residues.

This sequence belongs to the universal ribosomal protein uS12 family. Part of the 30S ribosomal subunit. Contacts proteins S8 and S17. May interact with IF1 in the 30S initiation complex.

With S4 and S5 plays an important role in translational accuracy. In terms of biological role, interacts with and stabilizes bases of the 16S rRNA that are involved in tRNA selection in the A site and with the mRNA backbone. Located at the interface of the 30S and 50S subunits, it traverses the body of the 30S subunit contacting proteins on the other side and probably holding the rRNA structure together. The combined cluster of proteins S8, S12 and S17 appears to hold together the shoulder and platform of the 30S subunit. This is Small ribosomal subunit protein uS12 from Oleidesulfovibrio alaskensis (strain ATCC BAA-1058 / DSM 17464 / G20) (Desulfovibrio alaskensis).